Consider the following 80-residue polypeptide: D-alanyl carrier protein 2 (80 aa).

A Carrier domain is found at Met-1–Gln-80. Ser-38 is modified (O-(pantetheine 4'-phosphoryl)serine).

It belongs to the DltC family. 4'-phosphopantetheine is transferred from CoA to a specific serine of apo-DCP.

It localises to the cytoplasm. The protein operates within cell wall biogenesis; lipoteichoic acid biosynthesis. Functionally, carrier protein involved in the D-alanylation of lipoteichoic acid (LTA). The loading of thioester-linked D-alanine onto DltC is catalyzed by D-alanine--D-alanyl carrier protein ligase DltA. The DltC-carried D-alanyl group is further transferred to cell membrane phosphatidylglycerol (PG) by forming an ester bond, probably catalyzed by DltD. D-alanylation of LTA plays an important role in modulating the properties of the cell wall in Gram-positive bacteria, influencing the net charge of the cell wall. The polypeptide is D-alanyl carrier protein 2 (Lactiplantibacillus plantarum (strain ATCC BAA-793 / NCIMB 8826 / WCFS1) (Lactobacillus plantarum)).